Reading from the N-terminus, the 316-residue chain is Ribose-phosphate pyrophosphokinase (316 aa).

ATP is bound by residues 41-43 (DGE) and 100-101 (RQ). 2 residues coordinate Mg(2+): His-134 and Asp-174. Lys-197 is an active-site residue. D-ribose 5-phosphate is bound by residues Arg-199, Asp-223, and 227–231 (DTAGT).

Belongs to the ribose-phosphate pyrophosphokinase family. Class I subfamily. In terms of assembly, homohexamer. Requires Mg(2+) as cofactor.

It is found in the cytoplasm. It carries out the reaction D-ribose 5-phosphate + ATP = 5-phospho-alpha-D-ribose 1-diphosphate + AMP + H(+). It functions in the pathway metabolic intermediate biosynthesis; 5-phospho-alpha-D-ribose 1-diphosphate biosynthesis; 5-phospho-alpha-D-ribose 1-diphosphate from D-ribose 5-phosphate (route I): step 1/1. Involved in the biosynthesis of the central metabolite phospho-alpha-D-ribosyl-1-pyrophosphate (PRPP) via the transfer of pyrophosphoryl group from ATP to 1-hydroxyl of ribose-5-phosphate (Rib-5-P). The sequence is that of Ribose-phosphate pyrophosphokinase from Caldanaerobacter subterraneus subsp. tengcongensis (strain DSM 15242 / JCM 11007 / NBRC 100824 / MB4) (Thermoanaerobacter tengcongensis).